Reading from the N-terminus, the 527-residue chain is Bifunctional purine biosynthesis protein PurH (527 aa).

The 149-residue stretch at 1 to 149 folds into the MGS-like domain; that stretch reads MASDFLPVHR…KNFARVAVAT (149 aa).

It belongs to the PurH family.

The catalysed reaction is (6R)-10-formyltetrahydrofolate + 5-amino-1-(5-phospho-beta-D-ribosyl)imidazole-4-carboxamide = 5-formamido-1-(5-phospho-D-ribosyl)imidazole-4-carboxamide + (6S)-5,6,7,8-tetrahydrofolate. It catalyses the reaction IMP + H2O = 5-formamido-1-(5-phospho-D-ribosyl)imidazole-4-carboxamide. It functions in the pathway purine metabolism; IMP biosynthesis via de novo pathway; 5-formamido-1-(5-phospho-D-ribosyl)imidazole-4-carboxamide from 5-amino-1-(5-phospho-D-ribosyl)imidazole-4-carboxamide (10-formyl THF route): step 1/1. Its pathway is purine metabolism; IMP biosynthesis via de novo pathway; IMP from 5-formamido-1-(5-phospho-D-ribosyl)imidazole-4-carboxamide: step 1/1. The sequence is that of Bifunctional purine biosynthesis protein PurH from Xylella fastidiosa (strain 9a5c).